The following is a 537-amino-acid chain: Oocyte zinc finger protein XlCOF29 (537 aa).

The interval Met1–Glu21 is disordered. 6 C2H2-type zinc fingers span residues Phe375 to His397, Phe403 to His425, Phe431 to His453, Tyr459 to His481, Tyr487 to His509, and Phe515 to His537.

Belongs to the krueppel C2H2-type zinc-finger protein family.

The protein localises to the nucleus. In terms of biological role, may be involved in transcriptional regulation. This Xenopus laevis (African clawed frog) protein is Oocyte zinc finger protein XlCOF29.